Reading from the N-terminus, the 699-residue chain is Ubiquitin-like modifier-activating enzyme ATG7 (699 aa).

The short motif at 370–375 (GAGTLG) is the GXGXXG motif element. The Glycyl thioester intermediate role is filled by cysteine 550. The interval 653–691 (ALASRDYVAELSGLAEVQRLAEKAAAEMQWSEDEEGMGE) is homodimerization.

It belongs to the ATG7 family. As to quaternary structure, homodimer. Interacts with ATG8 through a thioester bond between Cys-550 and the C-terminal Gly of ATG8 and with ATG12 through a thioester bond between Cys-550 and the C-terminal Gly of ATG12. Also interacts with ATG3.

The protein resides in the cytoplasm. Its subcellular location is the preautophagosomal structure. In terms of biological role, E1-like activating enzyme involved in the 2 ubiquitin-like systems required for cytoplasm to vacuole transport (Cvt) and autophagy. Activates ATG12 for its conjugation with ATG5 and ATG8 for its conjugation with phosphatidylethanolamine. Both systems are needed for the ATG8 association to Cvt vesicles and autophagosomes membranes. Autophagy is essential for maintenance of amino acid levels and protein synthesis under nitrogen starvation. Required for selective autophagic degradation of the nucleus (nucleophagy) as well as for mitophagy which contributes to regulate mitochondrial quantity and quality by eliminating the mitochondria to a basal level to fulfill cellular energy requirements and preventing excess ROS production. Required for normal mycelial growth and conidiogenesis. The protein is Ubiquitin-like modifier-activating enzyme ATG7 of Sordaria macrospora (strain ATCC MYA-333 / DSM 997 / K(L3346) / K-hell).